The sequence spans 379 residues: Alcohol dehydrogenase class-2 isozyme 1 (379 aa).

Cysteine 47, histidine 69, cysteine 99, cysteine 102, cysteine 105, cysteine 113, and cysteine 176 together coordinate Zn(2+). NAD(+) is bound by residues 205 to 210 (GLGGVG), aspartate 229, lysine 234, 298 to 300 (VGV), and arginine 374.

This sequence belongs to the zinc-containing alcohol dehydrogenase family. Class-II subfamily. As to quaternary structure, homodimer. Requires Zn(2+) as cofactor.

The protein resides in the cytoplasm. It carries out the reaction a primary alcohol + NAD(+) = an aldehyde + NADH + H(+). The catalysed reaction is a secondary alcohol + NAD(+) = a ketone + NADH + H(+). This is Alcohol dehydrogenase class-2 isozyme 1 (ADH2-1) from Oryctolagus cuniculus (Rabbit).